A 309-amino-acid chain; its full sequence is D-alanine--D-alanine ligase (309 aa).

Positions 104-306 constitute an ATP-grasp domain; it reads KLLWQSFNLP…YQILVQKILE (203 aa). 137 to 192 lines the ATP pocket; the sequence is ISLLGLPIIVKPNQEGSSIGITIVYSYETLYKACKTAFIFDNSILIEKFIYGEEYT. The Mg(2+) site is built by aspartate 260, glutamate 273, and asparagine 275.

The protein belongs to the D-alanine--D-alanine ligase family. The cofactor is Mg(2+). Mn(2+) serves as cofactor.

The protein localises to the cytoplasm. It carries out the reaction 2 D-alanine + ATP = D-alanyl-D-alanine + ADP + phosphate + H(+). It participates in cell wall biogenesis; peptidoglycan biosynthesis. Its function is as follows. Cell wall formation. In Buchnera aphidicola subsp. Baizongia pistaciae (strain Bp), this protein is D-alanine--D-alanine ligase.